The sequence spans 213 residues: Dimethylamine corrinoid protein 3 (213 aa).

The region spanning 1-91 (MADIEGLLHE…DLPAGAEKKL (91 aa)) is the B12-binding N-terminal domain. The B12-binding domain occupies 92-213 (GVIVNGTVEG…AVAKAKELLL (122 aa)). Residue His104 coordinates methylcob(III)alamin.

The protein belongs to the methylamine corrinoid protein family.

The protein operates within one-carbon metabolism; methanogenesis from dimethylamine. In terms of biological role, acts as a methyl group carrier between MtbB and MtbA. The polypeptide is Dimethylamine corrinoid protein 3 (mtbC3) (Methanosarcina acetivorans (strain ATCC 35395 / DSM 2834 / JCM 12185 / C2A)).